The sequence spans 330 residues: Small ribosomal subunit protein uS2 (330 aa).

This sequence belongs to the universal ribosomal protein uS2 family.

The protein is Small ribosomal subunit protein uS2 of Bradyrhizobium sp. (strain BTAi1 / ATCC BAA-1182).